Reading from the N-terminus, the 155-residue chain is Small ribosomal subunit protein uS7 (155 aa).

The protein belongs to the universal ribosomal protein uS7 family. In terms of assembly, part of the 30S ribosomal subunit. Contacts proteins S9 and S11.

Its function is as follows. One of the primary rRNA binding proteins, it binds directly to 16S rRNA where it nucleates assembly of the head domain of the 30S subunit. Is located at the subunit interface close to the decoding center, probably blocks exit of the E-site tRNA. The polypeptide is Small ribosomal subunit protein uS7 (Xanthomonas axonopodis pv. citri (strain 306)).